The following is a 521-amino-acid chain: Small ribosomal subunit protein mL104 (rPPR9) (521 aa).

Residues Met1–Phe59 constitute a mitochondrion transit peptide. PPR repeat units lie at residues Gly174–Asp204, Asp210–Glu240, Asp244–Ile278, Gly279–Met313, Asn321–Pro355, Asp356–Glu390, Asn393–Pro427, and Gly428–Val462. Residues Glu480–Thr495 show a composition bias toward basic and acidic residues. The tract at residues Glu480–Lys499 is disordered. Residues Lys486 to Lys503 carry the Nuclear localization signal motif.

The protein belongs to the PPR family. P subfamily. As to quaternary structure, interacts with NAP1;1 and TCP8. Able to bind mitochondrial RNA in vitro. Component of the mitochondrial ribosome small subunit. As to expression, expressed in root tips, lateral root primordia and leaf primordia. Highly detected in the mature pollen grains.

The protein resides in the mitochondrion matrix. It localises to the nucleus. Functionally, RNA-binding protein that functions in both mitochondrion and nucleus. In mitochondrion, it is associated with polysomes and may play a role in translation. Required during embryogenesis. In nucleus, might be involved in the regulation of its own gene expression. This Arabidopsis thaliana (Mouse-ear cress) protein is Small ribosomal subunit protein mL104 (rPPR9) (PNM1).